Consider the following 482-residue polypeptide: Beta-1,3-glucan-binding protein 2 (482 aa).

Positions 1-18 are cleaved as a signal peptide; that stretch reads MWIKSVCLFATIAGCLGQ. In terms of domain architecture, CBM39 spans 23–122; it reads YKVPDAKLEA…GEWTVTEFVN (100 aa). Residue asparagine 124 is glycosylated (N-linked (GlcNAc...) asparagine). The segment at 127-153 is disordered; that stretch reads VVDTSTAPPPVAPAVSEEDQSPGPQWR. The region spanning 128 to 482 is the GH16 domain; it reads VDTSTAPPPV…KVDYVRVYAL (355 aa). The N-linked (GlcNAc...) asparagine glycan is linked to asparagine 189.

As to quaternary structure, monomer. In terms of processing, N-glycosylated. In terms of tissue distribution, cuticle and fat body.

The protein localises to the secreted. In terms of biological role, involved in the recognition of invading microorganisms. Binds specifically to beta-1,3-glucan and lipoteichoic acid and causes aggregation of invading microorganisms. Binding to beta-1,3-glucan activates the phenoloxidase cascade. In Manduca sexta (Tobacco hawkmoth), this protein is Beta-1,3-glucan-binding protein 2.